The sequence spans 188 residues: Adenine phosphoribosyltransferase (188 aa).

Belongs to the purine/pyrimidine phosphoribosyltransferase family. In terms of assembly, homodimer.

The protein localises to the cytoplasm. The enzyme catalyses AMP + diphosphate = 5-phospho-alpha-D-ribose 1-diphosphate + adenine. It participates in purine metabolism; AMP biosynthesis via salvage pathway; AMP from adenine: step 1/1. Functionally, catalyzes a salvage reaction resulting in the formation of AMP, that is energically less costly than de novo synthesis. The polypeptide is Adenine phosphoribosyltransferase (Burkholderia vietnamiensis (strain G4 / LMG 22486) (Burkholderia cepacia (strain R1808))).